Consider the following 161-residue polypeptide: DNA-directed RNA polymerase 18 kDa subunit (161 aa).

This sequence belongs to the poxviridae DNA-directed RNA polymerase 18 kDa subunit family. The DNA-dependent RNA polymerase used for intermediate and late genes expression consists of eight subunits Rpo30/OPG66, Rpo7/OPG90, Rpo22/OPG103, Rpo147/OPG105, Rpo18/OPG119, Rpo19/OPG131, Rpo132/OPG151 and Rpo35/OPG156. The same holoenzyme, with the addition of the transcription-specificity factor OPG109, is used for early gene expression.

The protein localises to the virion. The enzyme catalyses RNA(n) + a ribonucleoside 5'-triphosphate = RNA(n+1) + diphosphate. Functionally, part of the DNA-dependent RNA polymerase which catalyzes the transcription of viral DNA into RNA using the four ribonucleoside triphosphates as substrates. Responsible for the transcription of early, intermediate and late genes. DNA-dependent RNA polymerase associates with the early transcription factor (ETF), itself composed of OPG118 and OPG133, thereby allowing the early genes transcription. Late transcription, and probably also intermediate transcription, require newly synthesized RNA polymerase. The chain is DNA-directed RNA polymerase 18 kDa subunit (OPG119) from Homo sapiens (Human).